Reading from the N-terminus, the 662-residue chain is Pro-neuregulin-1, membrane-bound isoform (662 aa).

A propeptide spanning residues 1 to 13 is cleaved from the precursor; the sequence is MSERKEGRGKGKG. The disordered stretch occupies residues 1–52; that stretch reads MSERKEGRGKGKGKKKDRGSRGKPGPAEGDPSPALPPRLKEMKSQESAAGSK. Residues 14 to 265 are Extracellular-facing; that stretch reads KKKDRGSRGK…SKAEELYQKR (252 aa). The 92-residue stretch at 37 to 128 folds into the Ig-like C2-type domain; the sequence is PRLKEMKSQE…GNDSASANIT (92 aa). Residues cysteine 57 and cysteine 112 are joined by a disulfide bond. N-linked (GlcNAc...) asparagine glycans are attached at residues asparagine 120, asparagine 126, and asparagine 164. One can recognise an EGF-like domain in the interval 178-222; sequence HLIKCAEKEKTFCVNGGECFTVKDLSNPSRYLCKCPNEFTGDRCQ. 3 cysteine pairs are disulfide-bonded: cysteine 182–cysteine 196, cysteine 190–cysteine 210, and cysteine 212–cysteine 221. The chain crosses the membrane as a helical span at residues 266 to 288; the sequence is VLTITGICIALLVVGIMCVVAYC. Residues 289–662 are Cytoplasmic-facing; sequence KTKKQRQKLH…VIANQDPIAV (374 aa). Residues 358-373 are compositionally biased toward low complexity; the sequence is SHYTSTAHHSTTVTQT. Disordered regions lie at residues 358–383, 398–480, and 547–610; these read SHYTSTAHHSTTVTQTPSHSWSNGHT, SVEN…PVSS, and YETT…DTPF. The segment covering 374 to 383 has biased composition (polar residues); it reads PSHSWSNGHT. Positions 410–420 are enriched in gly residues; the sequence is GPRGRLHGLGG. Positions 425–445 are enriched in basic and acidic residues; the sequence is SFLRHARETPDSYRDSPHSER. Positions 564–574 are enriched in basic residues; sequence TNSRRAKRTKP. The segment covering 585–596 has biased composition (low complexity); sequence DSNTSSVSSNSE.

This sequence belongs to the neuregulin family. As to quaternary structure, the cytoplasmic domain interacts with the LIM domain region of LIMK1. Forms a ternary complex with ERBB3 and ITGAV:ITGB3 or ITGA6:ITGB4. Interacts with NRDC and BACE1. Post-translationally, proteolytic cleavage close to the plasma membrane on the external face leads to the release of the soluble growth factor form. In terms of processing, N- and O-glycosylated. Extensive glycosylation precedes the proteolytic cleavage. As to expression, widely expressed. Most tissues contain isoform alpha2A and isoform alpha2B. Isoform Alpha2 and isoform beta2 are the predominant forms in mesenchymal and non-neuronal organs. Isoform Beta1 is enriched in brain and spinal cord, but not in muscle and heart. Isoform Alpha2C is highly expressed in spinal cord, moderately in lung, brain, ovary, and stomach, in low amounts in the kidney, skin and heart and not detected in the liver, spleen, and placenta.

It is found in the cell membrane. The protein localises to the secreted. Functionally, direct ligand for ERBB3 and ERBB4 tyrosine kinase receptors. Concomitantly recruits ERBB1 and ERBB2 coreceptors, resulting in ligand-stimulated tyrosine phosphorylation and activation of the ERBB receptors. The multiple isoforms perform diverse functions such as inducing growth and differentiation of epithelial, glial, neuronal, and skeletal muscle cells; inducing expression of acetylcholine receptor in synaptic vesicles during the formation of the neuromuscular junction; stimulating lobuloalveolar budding and milk production in the mammary gland and inducing differentiation of mammary tumor cells; stimulating Schwann cell proliferation; implication in the development of the myocardium such as trabeculation of the developing heart. Binds to ERBB4 and ERBB3. Acts as a ligand for integrins and binds (via EGF domain) to integrins ITGAV:ITGB3 or ITGA6:ITGB4. Its binding to integrins and subsequent ternary complex formation with integrins and ERRB3 are essential for NRG1-ERBB signaling. Induces the phosphorylation and activation of MAPK3/ERK1, MAPK1/ERK2 and AKT1, and ligand-dependent ERBB4 endocytosis is essential for the NRG1-mediated activation of these kinases in neurons. This Rattus norvegicus (Rat) protein is Pro-neuregulin-1, membrane-bound isoform (Nrg1).